The primary structure comprises 288 residues: Programmed cell death protein 1 (288 aa).

Positions 1-24 are cleaved as a signal peptide; sequence MWVRQVPWSFTWAVLQLSWQSGWL. At 25 to 169 the chain is on the extracellular side; sequence LEVPNGPWRS…PKPEGRFQGM (145 aa). Residues 31-139 form the Ig-like V-type domain; that stretch reads PWRSLTFYPA…PKAKIEESPG (109 aa). Residues asparagine 49, asparagine 58, asparagine 74, and asparagine 116 are each glycosylated (N-linked (GlcNAc...) asparagine). Residues cysteine 54 and cysteine 123 are joined by a disulfide bond. The tract at residues 70–77 is interaction with CD274/PDCD1L1; sequence LSPSNQTE. Residues 170-190 form a helical membrane-spanning segment; sequence VIGIMSALVGIPVLLLLAWAL. The Cytoplasmic portion of the chain corresponds to 191–288; sequence AVFCSTSMSE…HEDGHCSWPL (98 aa). The short motif at 223–228 is the ITIM motif element; that stretch reads VAYEEL. Tyrosine 225 carries the post-translational modification Phosphotyrosine. A Glycyl lysine isopeptide (Lys-Gly) (interchain with G-Cter in ubiquitin) cross-link involves residue lysine 235. Threonine 236 is modified (phosphothreonine; by MAPK3). The ITSM motif motif lies at 247–251; that stretch reads EYATI. Phosphotyrosine is present on tyrosine 248. Residues 263–288 are disordered; sequence GRRGSADGLQGPRPPRHEDGHCSWPL. The segment covering 277 to 288 has biased composition (basic and acidic residues); that stretch reads PRHEDGHCSWPL.

Monomer. Interacts with CD274/PDCD1L1. Interacts with CD273/PDCD1LG2. Interacts with FBXO38; leading to ubiquitination and degradation by the proteasome. Post-translationally, ubiquitinated at Lys-235 by the SCF(FBXO38) complex, leading to its proteasomal degradation. Ubiquitinated via 'Lys-48'-linked polyubiquitin chains. Deubiquitinated and thus stabilized by USP5. Tyrosine phosphorylated at Tyr-225 (within ITIM motif) and Tyr-248 (ITSM motif) upon ligand binding. Phosphorylation at Tyr-248 promotes the recruitment of the protein tyrosine phosphatase PTPN11/SHP-2 that mediates dephosphorylation of key TCR proximal signaling molecules, such as ZAP70, PRKCQ/PKCtheta and CD247/CD3zeta. Phosphorylation at Thr-236 promotes the recruitment of the deubiquitinase USP5. As to expression, thymus-specific.

It localises to the cell membrane. Its function is as follows. Inhibitory receptor on antigen activated T-cells that plays a critical role in induction and maintenance of immune tolerance to self. Delivers inhibitory signals upon binding to ligands, such as CD274/PDCD1L1 and CD273/PDCD1LG2. Following T-cell receptor (TCR) engagement, PDCD1 associates with CD3-TCR in the immunological synapse and directly inhibits T-cell activation. Suppresses T-cell activation through the recruitment of PTPN11/SHP-2: following ligand-binding, PDCD1 is phosphorylated within the ITSM motif, leading to the recruitment of the protein tyrosine phosphatase PTPN11/SHP-2 that mediates dephosphorylation of key TCR proximal signaling molecules, such as ZAP70, PRKCQ/PKCtheta and CD247/CD3zeta. The PDCD1-mediated inhibitory pathway is exploited by tumors to attenuate anti-tumor immunity and facilitate tumor survival. In Mus musculus (Mouse), this protein is Programmed cell death protein 1.